Reading from the N-terminus, the 316-residue chain is Epiphycan (316 aa).

An N-terminal signal peptide occupies residues methionine 1–threonine 23. Residue serine 98 is glycosylated (O-linked (Xyl...) (dermatan sulfate) serine). Residues valine 100–lysine 137 form the LRRNT domain. Cysteines 112 and 124 form a disulfide. 6 LRR repeats span residues asparagine 138–asparagine 159, asparagine 162–arginine 183, glutamine 186–leucine 207, glutamate 232–glutamate 252, serine 253–lysine 274, and alanine 284–tyrosine 304. A disulfide bond links cysteine 273 and cysteine 306. The N-linked (GlcNAc...) asparagine glycan is linked to asparagine 296.

The protein belongs to the small leucine-rich proteoglycan (SLRP) family. SLRP class III subfamily. In terms of processing, the O-linked glycosaminoglycan chain(s) are dermatan sulfate. Preferentially expressed in flattened chondrocytes of developing chick limb cartilage. Also found in the cartilage peripheral zone bordering with bone marrow cavity.

The protein resides in the secreted. It localises to the extracellular space. It is found in the extracellular matrix. Functionally, may have a role in bone formation and also in establishing the ordered structure of cartilage through matrix organization. The sequence is that of Epiphycan (EPYC) from Gallus gallus (Chicken).